The following is a 1387-amino-acid chain: DNA-directed RNA polymerase subunit beta'' (1387 aa).

Residues Cys-220, Cys-291, Cys-298, and Cys-301 each coordinate Zn(2+).

This sequence belongs to the RNA polymerase beta' chain family. RpoC2 subfamily. In terms of assembly, in plastids the minimal PEP RNA polymerase catalytic core is composed of four subunits: alpha, beta, beta', and beta''. When a (nuclear-encoded) sigma factor is associated with the core the holoenzyme is formed, which can initiate transcription. Zn(2+) serves as cofactor.

It is found in the plastid. The protein localises to the chloroplast. The enzyme catalyses RNA(n) + a ribonucleoside 5'-triphosphate = RNA(n+1) + diphosphate. Its function is as follows. DNA-dependent RNA polymerase catalyzes the transcription of DNA into RNA using the four ribonucleoside triphosphates as substrates. The polypeptide is DNA-directed RNA polymerase subunit beta'' (Carica papaya (Papaya)).